The following is a 916-amino-acid chain: Translation initiation factor IF-2 (916 aa).

The segment covering 151–191 (NLDEQQRLAESDRARDEAIQRKRDEEQAAKDRVEAERKAAE) has biased composition (basic and acidic residues). Disordered regions lie at residues 151-262 (NLDE…SHVM) and 280-328 (HLSA…ERPT). Composition is skewed to low complexity over residues 192–243 (EAAA…ATPA) and 293–305 (RGKPTGRPGSSSS). The tr-type G domain maps to 415-584 (SRPPVVTIMG…SLQAEVLELK (170 aa)). A G1 region spans residues 424 to 431 (GHVDHGKT). Residue 424–431 (GHVDHGKT) coordinates GTP. A G2 region spans residues 449–453 (GITQH). A G3 region spans residues 470–473 (DTPG). Residues 470–474 (DTPGH) and 524–527 (NKID) contribute to the GTP site. Residues 524–527 (NKID) form a G4 region. The G5 stretch occupies residues 560-562 (SAK).

This sequence belongs to the TRAFAC class translation factor GTPase superfamily. Classic translation factor GTPase family. IF-2 subfamily.

It is found in the cytoplasm. Its function is as follows. One of the essential components for the initiation of protein synthesis. Protects formylmethionyl-tRNA from spontaneous hydrolysis and promotes its binding to the 30S ribosomal subunits. Also involved in the hydrolysis of GTP during the formation of the 70S ribosomal complex. The polypeptide is Translation initiation factor IF-2 (Xanthomonas campestris pv. campestris (strain B100)).